The chain runs to 279 residues: uncharacterized protein (279 aa).

The HTH rpiR-type domain maps to 1 to 77 (MGILEQLENP…VTLAKEISNK (77 aa)). The H-T-H motif DNA-binding region spans 37–56 (ISIIAKESGVGEATITRFTK). The SIS domain occupies 123–263 (CRDLIMNAKR…YTEVIKEMFS (141 aa)).

This is an uncharacterized protein from Clostridium perfringens (strain 13 / Type A).